A 464-amino-acid polypeptide reads, in one-letter code: Argininosuccinate lyase (464 aa).

The protein belongs to the lyase 1 family. Argininosuccinate lyase subfamily.

The protein resides in the cytoplasm. The catalysed reaction is 2-(N(omega)-L-arginino)succinate = fumarate + L-arginine. The protein operates within amino-acid biosynthesis; L-arginine biosynthesis; L-arginine from L-ornithine and carbamoyl phosphate: step 3/3. This is Argininosuccinate lyase from Koribacter versatilis (strain Ellin345).